The following is a 239-amino-acid chain: Probable GTP-binding protein EngB (239 aa).

The EngB-type G domain occupies Gln-23–Leu-219. Residues Gly-31 to Ser-38, Gly-58 to His-62, Asp-92 to Gly-95, Thr-159 to Asp-162, and Phe-193 to Ala-200 each bind GTP. Mg(2+)-binding residues include Ser-38 and Thr-60.

The protein belongs to the TRAFAC class TrmE-Era-EngA-EngB-Septin-like GTPase superfamily. EngB GTPase family. The cofactor is Mg(2+).

In terms of biological role, necessary for normal cell division and for the maintenance of normal septation. This is Probable GTP-binding protein EngB from Herminiimonas arsenicoxydans.